The sequence spans 304 residues: uncharacterized protein (304 aa).

The tract at residues 1 to 183 is disordered; the sequence is MTAPNEPGAL…ARVQLSARRS (183 aa). A compositionally biased stretch (low complexity) spans 132-166; sequence PTPRAPQRNPAPARPAEGGAGSRGDSAAGSSGGRS. The next 2 helical transmembrane spans lie at 206-226 and 265-285; these read LLLS…LYLV and FLIG…GAFV.

The protein to M.leprae ML0007.

The protein resides in the cell membrane. This is an uncharacterized protein from Mycobacterium tuberculosis (strain ATCC 25618 / H37Rv).